The chain runs to 244 residues: Cell division protein ZapD (244 aa).

This sequence belongs to the ZapD family. Interacts with FtsZ.

It localises to the cytoplasm. Cell division factor that enhances FtsZ-ring assembly. Directly interacts with FtsZ and promotes bundling of FtsZ protofilaments, with a reduction in FtsZ GTPase activity. The protein is Cell division protein ZapD of Shewanella sp. (strain MR-4).